A 368-amino-acid chain; its full sequence is DNA replication and repair protein RecF (368 aa).

30 to 37 (GDNGAGKT) contributes to the ATP binding site.

This sequence belongs to the RecF family.

The protein localises to the cytoplasm. Functionally, the RecF protein is involved in DNA metabolism; it is required for DNA replication and normal SOS inducibility. RecF binds preferentially to single-stranded, linear DNA. It also seems to bind ATP. The polypeptide is DNA replication and repair protein RecF (Xanthomonas campestris pv. campestris (strain 8004)).